The primary structure comprises 349 residues: Early nodulin-like protein 2 (349 aa).

Residues 1-28 form the signal peptide; it reads MTFLKMKSLSFFFTILLSLSTLFTISNA. In terms of domain architecture, Phytocyanin spans 29-130; it reads RKFNVGGSGA…GQKLNVVVIS (102 aa). C84 and C118 are joined by a disulfide. Positions 136–330 are disordered; it reads TAQSPHAAAP…GQKKSSANGM (195 aa). Low complexity-rich tracts occupy residues 145-201 and 224-234; these read PGSS…SPPG and TSPVSPSSAPM. The segment covering 249–260 has biased composition (polar residues); the sequence is IPPSSAPMTSPP. Residues 263-312 show a composition bias toward low complexity; that stretch reads MAPKSSSPVSNSPTVSPSLAPGGSTSSSPSDSPSGSAMGPSGDGPSAAGD. S325 is lipidated: GPI-anchor amidated serine. The propeptide at 326 to 349 is removed in mature form; that stretch reads SANGMTVMSITTVLSLVLTIFLSA.

This sequence belongs to the early nodulin-like (ENODL) family. In terms of tissue distribution, mostly expressed in leaves and roots, and, to a lower extent, in seedlings, stems and flowers, but barely in seeds.

The protein resides in the cell membrane. In terms of biological role, may act as a carbohydrate transporter. In Arabidopsis thaliana (Mouse-ear cress), this protein is Early nodulin-like protein 2.